Here is a 202-residue protein sequence, read N- to C-terminus: MATLKANERTDFKRSTLRKIRHSGHVPGIIYGKEITNTPVSLDSVELLKTLRDEGKNTIITIDVNGNQQSVMVTDLQTDPLKNELTHADFQVVNMSEELEAEVPIQLTGEAKGVKDGGVIQQPLHELSIKAKPKDIPQTINVDISGLEMNDVLTIADLTADGNYTFTNDPEEVVASILPPKQEAFEEDAEPSPGEEPEGENQ.

The tract at residues 180–202 is disordered; sequence PKQEAFEEDAEPSPGEEPEGENQ. The span at 185-202 shows a compositional bias: acidic residues; it reads FEEDAEPSPGEEPEGENQ.

Belongs to the bacterial ribosomal protein bL25 family. CTC subfamily. In terms of assembly, part of the 50S ribosomal subunit; part of the 5S rRNA/L5/L18/L25 subcomplex. Contacts the 5S rRNA. Binds to the 5S rRNA independently of L5 and L18.

Its function is as follows. This is one of the proteins that binds to the 5S RNA in the ribosome where it forms part of the central protuberance. The polypeptide is Large ribosomal subunit protein bL25 (Bacillus velezensis (strain DSM 23117 / BGSC 10A6 / LMG 26770 / FZB42) (Bacillus amyloliquefaciens subsp. plantarum)).